Consider the following 235-residue polypeptide: uncharacterized protein (235 aa).

7 consecutive transmembrane segments (helical) span residues 2–22 (VIGP…GALL), 34–54 (MTSI…VKCA), 56–76 (LPAM…CLLE), 102–122 (FIQN…GIFG), 147–167 (MIFA…LLII), 178–198 (ILPL…GLLL), and 210–230 (MFPV…SAAW).

It is found in the cell membrane. This is an uncharacterized protein from Escherichia coli (strain K12).